We begin with the raw amino-acid sequence, 1049 residues long: Ataxin-2-like protein (1049 aa).

N-acetylmethionine is present on Met-1. The interval 1–54 is disordered; sequence MLKPQPPQQTSQPQQPPPTQQAVARRSPGGTSPPNGGLPGPLTATAAPPGPPAA. Ser-27 is subject to Phosphoserine. Position 45 is a phosphothreonine (Thr-45). The segment at 96 to 119 is interaction with MPL; it reads SVRGQTTGKGPPQSPVFEGVYNNS. A Phosphoserine modification is found at Ser-109. Tyr-116 is subject to Phosphotyrosine. Positions 120–197 constitute a Sm domain; that stretch reads RMLHFLTAVV…VLLVHFRNVD (78 aa). Lys-205 is subject to N6-acetyllysine. Ser-236 carries the phosphoserine modification. Position 262 is a phosphotyrosine (Tyr-262). Ser-304 is modified (phosphoserine). The residue at position 307 (Tyr-307) is a Phosphotyrosine. Positions 314–326 are enriched in basic and acidic residues; the sequence is ENDDGRTEEEKHS. 7 disordered regions span residues 314 to 522, 554 to 573, 578 to 704, 736 to 772, 824 to 852, 868 to 944, and 999 to 1049; these read ENDD…RNLE, QFKL…FPSR, EAKG…LTAG, VSNS…PMMQ, SNPR…AEQP, HATQ…SSFP, and PQGH…PPGN. The segment covering 328–340 has biased composition (polar residues); that stretch reads VQRQGSGRESPSL. Ser-333 and Ser-337 each carry phosphoserine. Residue Lys-346 forms a Glycyl lysine isopeptide (Lys-Gly) (interchain with G-Cter in SUMO2) linkage. The residue at position 347 (Tyr-347) is a Phosphotyrosine. Arg-359 bears the Asymmetric dimethylarginine mark. Low complexity predominate over residues 361–378; it reads GVRCSSSRGGRPGLSSLP. Ser-389, Ser-407, and Ser-453 each carry phosphoserine. Residues 454–466 show a composition bias toward low complexity; that stretch reads PKSAAPAPVSASC. The span at 475–487 shows a compositional bias: polar residues; it reads VASSASIPVTSSV. A phosphoserine mark is found at Ser-496 and Ser-499. Residues 508-519 show a composition bias toward basic and acidic residues; that stretch reads DVKELPTKEPSR. Residues Ser-560, Ser-561, and Ser-562 each carry the phosphoserine modification. Residues 578 to 587 are compositionally biased toward basic and acidic residues; that stretch reads EAKGKEKEVD. Ser-597 is subject to Phosphoserine. Thr-635 is modified (phosphothreonine). Phosphoserine occurs at positions 637, 677, 683, and 687. Residues 681–697 are compositionally biased toward low complexity; the sequence is STSTPTSPGPRTHSTPS. Polar residues-rich tracts occupy residues 824 to 845 and 878 to 902; these read SNPR…STPQ and QPAT…QHQA. The span at 935–944 shows a compositional bias: low complexity; the sequence is SAQSPQSSFP. Polar residues predominate over residues 1033–1042; it reads QVQSHPSQQL.

It belongs to the ataxin-2 family. In terms of assembly, interacts with MPL/TPOR and EPOR and dissociates after ligand stimulation. Interacts with DDX6, G3BP, and ATXN2. Interacts with PRMT1. Interacts with CIC and ATXN1. Post-translationally, thrombopoietin triggers the phosphorylation on tyrosine residues in a way that is dependent on MPL C-terminal domain. In terms of processing, asymmetrically dimethylated. Probably methylated by PRMT1. Expressed in cerebellum.

It localises to the membrane. It is found in the cytoplasm. The protein resides in the nucleus speckle. The protein localises to the cytoplasmic granule. In terms of biological role, involved in the regulation of stress granule and P-body formation. This Mus musculus (Mouse) protein is Ataxin-2-like protein (Atxn2l).